A 279-amino-acid polypeptide reads, in one-letter code: Tryptophan 2,3-dioxygenase (279 aa).

Substrate is bound by residues 48–52, Y110, and R114; that span reads FIIQH. A heme-binding site is contributed by H237. Position 251 (T251) interacts with substrate.

This sequence belongs to the tryptophan 2,3-dioxygenase family. Homotetramer. Heme is required as a cofactor.

It catalyses the reaction L-tryptophan + O2 = N-formyl-L-kynurenine. Its pathway is amino-acid degradation; L-tryptophan degradation via kynurenine pathway; L-kynurenine from L-tryptophan: step 1/2. In terms of biological role, heme-dependent dioxygenase that catalyzes the oxidative cleavage of the L-tryptophan (L-Trp) pyrrole ring and converts L-tryptophan to N-formyl-L-kynurenine. Catalyzes the oxidative cleavage of the indole moiety. The chain is Tryptophan 2,3-dioxygenase from Bradyrhizobium diazoefficiens (strain JCM 10833 / BCRC 13528 / IAM 13628 / NBRC 14792 / USDA 110).